A 139-amino-acid polypeptide reads, in one-letter code: Holo-[acyl-carrier-protein] synthase (139 aa).

Mg(2+) contacts are provided by Asp8 and Glu61.

Belongs to the P-Pant transferase superfamily. AcpS family. Mg(2+) serves as cofactor.

It localises to the cytoplasm. It catalyses the reaction apo-[ACP] + CoA = holo-[ACP] + adenosine 3',5'-bisphosphate + H(+). Functionally, transfers the 4'-phosphopantetheine moiety from coenzyme A to a Ser of acyl-carrier-protein. The sequence is that of Holo-[acyl-carrier-protein] synthase from Bradyrhizobium sp. (strain BTAi1 / ATCC BAA-1182).